Here is a 341-residue protein sequence, read N- to C-terminus: Serine proteinase inhibitor 2 (341 aa).

It belongs to the serpin family. Poxviruses subfamily.

Its subcellular location is the host cytoplasm. Viral serpin that inhibits both cysteine and serine proteinases involved in the regulation of host inflammatory and apoptosis processes. Major anti-apoptotic protein which inhibits both intrinsic and extrinsic pathways and strongly cleaves host CASP1 and CASP8 but is a rather poor inhibitor of host CASP3. Prevents the proteolytic activity of host interleukin-1-beta converting enzyme (ICE) and ICE-like enzymes. Can also block apoptosis through host tumor necrosis factor (TNF) receptor. In Bos taurus (Bovine), this protein is Serine proteinase inhibitor 2 (OPG199).